Here is a 439-residue protein sequence, read N- to C-terminus: Ribosomal protein uS12 methylthiotransferase RimO (439 aa).

Residues 7–119 form the MTTase N-terminal domain; that stretch reads KQLCLISLGC…IDIMIAKKQN (113 aa). 6 residues coordinate [4Fe-4S] cluster: cysteine 16, cysteine 50, cysteine 82, cysteine 151, cysteine 155, and cysteine 158. In terms of domain architecture, Radical SAM core spans 137–368; sequence TGSSVHAYVK…ALKHQNHSFK (232 aa).

The protein belongs to the methylthiotransferase family. RimO subfamily. [4Fe-4S] cluster serves as cofactor.

The protein localises to the cytoplasm. The catalysed reaction is L-aspartate(89)-[ribosomal protein uS12]-hydrogen + (sulfur carrier)-SH + AH2 + 2 S-adenosyl-L-methionine = 3-methylsulfanyl-L-aspartate(89)-[ribosomal protein uS12]-hydrogen + (sulfur carrier)-H + 5'-deoxyadenosine + L-methionine + A + S-adenosyl-L-homocysteine + 2 H(+). Its function is as follows. Catalyzes the methylthiolation of an aspartic acid residue of ribosomal protein uS12. This is Ribosomal protein uS12 methylthiotransferase RimO from Helicobacter pylori (strain P12).